Here is a 344-residue protein sequence, read N- to C-terminus: Dihydroorotate dehydrogenase (quinone) (344 aa).

Residues 65–69 (AGLDK) and threonine 89 each bind FMN. Lysine 69 is a substrate binding site. 114–118 (NRMGF) provides a ligand contact to substrate. Residues asparagine 142 and asparagine 175 each coordinate FMN. Residue asparagine 175 coordinates substrate. Residue serine 178 is the Nucleophile of the active site. Position 180 (asparagine 180) interacts with substrate. Residues lysine 220 and threonine 248 each contribute to the FMN site. Position 249-250 (249-250 (NT)) interacts with substrate. FMN is bound by residues glycine 271, glycine 300, and 321 to 322 (YT).

Belongs to the dihydroorotate dehydrogenase family. Type 2 subfamily. In terms of assembly, monomer. Requires FMN as cofactor.

It is found in the cell membrane. It carries out the reaction (S)-dihydroorotate + a quinone = orotate + a quinol. It functions in the pathway pyrimidine metabolism; UMP biosynthesis via de novo pathway; orotate from (S)-dihydroorotate (quinone route): step 1/1. Catalyzes the conversion of dihydroorotate to orotate with quinone as electron acceptor. This Paraburkholderia phymatum (strain DSM 17167 / CIP 108236 / LMG 21445 / STM815) (Burkholderia phymatum) protein is Dihydroorotate dehydrogenase (quinone).